Consider the following 412-residue polypeptide: Translation initiation factor 2 subunit gamma (412 aa).

In terms of domain architecture, tr-type G spans 7–203 (QPEVNIGLVG…AIESEIPTPD (197 aa)). The G1 stretch occupies residues 16-23 (GHVDHGKT). Residues Asp-19, Thr-23, Gly-44, and Ser-46 each contribute to the Mg(2+) site. 19 to 24 (DHGKTT) serves as a coordination point for GTP. Residues 44-48 (GISIR) are G2. The segment at 90–93 (DAPG) is G3. GTP-binding positions include 146–149 (NKVD) and 181–183 (SAQ). A G4 region spans residues 146–149 (NKVD). The G5 stretch occupies residues 181–183 (SAQ).

Belongs to the TRAFAC class translation factor GTPase superfamily. Classic translation factor GTPase family. EIF2G subfamily. Heterotrimer composed of an alpha, a beta and a gamma chain. The cofactor is Mg(2+).

The catalysed reaction is GTP + H2O = GDP + phosphate + H(+). Its function is as follows. eIF-2 functions in the early steps of protein synthesis by forming a ternary complex with GTP and initiator tRNA. This chain is Translation initiation factor 2 subunit gamma, found in Halorubrum lacusprofundi (strain ATCC 49239 / DSM 5036 / JCM 8891 / ACAM 34).